The chain runs to 445 residues: Anthranilate N-benzoyltransferase protein 3 (445 aa).

Active-site proton acceptor residues include H164 and D392.

It belongs to the plant acyltransferase family. N-terminus is blocked.

It carries out the reaction anthranilate + benzoyl-CoA = N-benzoylanthranilate + CoA. The protein operates within phytoalexin biosynthesis; methoxydianthramide B biosynthesis. Catalyzes the formation of N-benzoylanthranilate, in the course of methoxydianthramide B, a phytoalexin. Phytoalexins are produced in response to infection by parasites, and are essential for the expression of disease resistance. The polypeptide is Anthranilate N-benzoyltransferase protein 3 (HCBT3) (Dianthus caryophyllus (Carnation)).